An 815-amino-acid chain; its full sequence is Heme-copper oxidase subunit I+III (815 aa).

The segment at 1–467 (MVSRLRGFLA…QLSTLGAFIF (467 aa)) is COX1. A helical membrane pass occupies residues 26–46 (LLYLVTSIAFLLIAGSLALLF). Histidine 70 is a Fe(II)-heme a binding site. 18 consecutive transmembrane segments (helical) span residues 71 to 91 (GLIM…NYIV), 105 to 125 (LNAL…ASFF), 157 to 177 (LAIF…LVTI), 197 to 217 (ILFT…GGAL), 242 to 262 (LFWF…LGAM), 281 to 301 (LTAF…HMFI), 314 to 334 (ITTI…IFTL), 339 to 359 (LVYT…IIGG), 380 to 400 (VVAH…IAGL), 419 to 439 (IHFA…FALM), 463 to 483 (GAFI…YSLV), 580 to 600 (ALFG…VFLL), 637 to 657 (WVFI…YFFI), 683 to 703 (LINT…YLGV), 708 to 728 (YLIT…FLTV), 736 to 756 (LLIA…YVTT), 758 to 778 (AHAL…VKLF), and 791 to 811 (VLAV…VFPL). Residues histidine 248, tyrosine 252, histidine 297, and histidine 298 each coordinate Cu cation. The 1'-histidyl-3'-tyrosine (His-Tyr) cross-link spans 248-252 (HPEVY). Histidine 383 contributes to the heme a3 binding site. Fe(II)-heme a is bound at residue histidine 385. Residues 545–815 (DVSNVPLSGG…TLVFPLYYLV (271 aa)) are COX3.

In the N-terminal section; belongs to the heme-copper respiratory oxidase family. This sequence in the C-terminal section; belongs to the cytochrome c oxidase subunit 3 family. Heme is required as a cofactor. The cofactor is Cu cation.

The protein localises to the cell membrane. The chain is Heme-copper oxidase subunit I+III (aoxB) from Aeropyrum pernix (strain ATCC 700893 / DSM 11879 / JCM 9820 / NBRC 100138 / K1).